The chain runs to 291 residues: Small ribosomal subunit protein uS2 (291 aa).

A disordered region spans residues 254 to 291 (RTSNRDNKNNKNNNNTDNTDNAASIKEEDLIGGSNNEN). Residues 263-277 (NKNNNNTDNTDNAAS) show a composition bias toward low complexity.

It belongs to the universal ribosomal protein uS2 family.

The protein is Small ribosomal subunit protein uS2 of Ehrlichia canis (strain Jake).